The sequence spans 147 residues: Nucleoside diphosphate kinase (147 aa).

6 residues coordinate ATP: Lys11, Phe59, Arg87, Thr93, Arg104, and Asn114. The Pros-phosphohistidine intermediate role is filled by His117.

The protein belongs to the NDK family. Mg(2+) serves as cofactor.

Its subcellular location is the cytoplasm. It catalyses the reaction a 2'-deoxyribonucleoside 5'-diphosphate + ATP = a 2'-deoxyribonucleoside 5'-triphosphate + ADP. The enzyme catalyses a ribonucleoside 5'-diphosphate + ATP = a ribonucleoside 5'-triphosphate + ADP. Its function is as follows. Major role in the synthesis of nucleoside triphosphates other than ATP. The ATP gamma phosphate is transferred to the NDP beta phosphate via a ping-pong mechanism, using a phosphorylated active-site intermediate. The polypeptide is Nucleoside diphosphate kinase (Sulfurisphaera tokodaii (strain DSM 16993 / JCM 10545 / NBRC 100140 / 7) (Sulfolobus tokodaii)).